The chain runs to 307 residues: Probable 2-methylisocitrate lyase 2 (307 aa).

Ser-53 to Ala-55 lines the substrate pocket. Residues Asp-92 and Asp-94 each coordinate Mg(2+). Substrate contacts are provided by residues Cys-129–Gly-130, Arg-164, Glu-194, Asn-216–Thr-218, Arg-247, and Arg-276.

It belongs to the isocitrate lyase/PEP mutase superfamily. Methylisocitrate lyase family. Homotetramer; dimer of dimers. It depends on Mg(2+) as a cofactor.

The enzyme catalyses (2S,3R)-3-hydroxybutane-1,2,3-tricarboxylate = pyruvate + succinate. The protein operates within organic acid metabolism; propanoate degradation. Its function is as follows. Involved in the catabolism of short chain fatty acids (SCFA) via the 2-methylcitrate cycle I (propionate degradation route). Catalyzes the thermodynamically favored C-C bond cleavage of (2R,3S)-2-methylisocitrate to yield pyruvate and succinate via an alpha-carboxy-carbanion intermediate. In Corynebacterium glutamicum (strain ATCC 13032 / DSM 20300 / JCM 1318 / BCRC 11384 / CCUG 27702 / LMG 3730 / NBRC 12168 / NCIMB 10025 / NRRL B-2784 / 534), this protein is Probable 2-methylisocitrate lyase 2.